The sequence spans 132 residues: UPF0299 membrane protein YohJ (132 aa).

Transmembrane regions (helical) follow at residues 7 to 27 (IIWQ…AGIF), 31 to 51 (LLPV…VLLA), 63 to 83 (GCYV…VGVM), and 93 to 113 (FGPV…VVSW).

The protein belongs to the UPF0299 family.

It is found in the cell inner membrane. The protein is UPF0299 membrane protein YohJ of Shigella boydii serotype 18 (strain CDC 3083-94 / BS512).